The sequence spans 250 residues: Pre-protein VI (250 aa).

Residues 1 to 33 constitute a propeptide that is removed on maturation; it reads MEDINFASLAPRHGSRPFMGNWQDIGTSNMSGG. Positions 34-54 are amphipathic alpha-helix essential for membrane lytic activity; it reads AFSWGSLWSGIKNFGSTIKNY. Positions 36–53 are involved in endosomal membrane lysis; it reads SWGSLWSGIKNFGSTIKN. Positions 48 to 74 are interaction with hexon protein; the sequence is GSTIKNYGSKAWNSSTGQMLRDKLKEQ. The short motif at 67-76 is the Nuclear export signal element; it reads LRDKLKEQNF. A disordered region spans residues 103–147; it reads INSKLDPRPPVEEPPPAVETVSPEGRGEKRPRPDREETLVTQIDE. A Phosphoserine; by host modification is found at Ser124. The segment covering 127-140 has biased composition (basic and acidic residues); sequence GRGEKRPRPDREET. The Nuclear localization signal signature appears at 131 to 135; that stretch reads KRPRP. Thr143 carries the phosphothreonine; by host modification. A PPXY motif motif is present at residues 148–151; it reads PPSY. Residues 206 to 220 show a composition bias toward low complexity; sequence PSRASLRRAASGPRS. The disordered stretch occupies residues 206-226; that stretch reads PSRASLRRAASGPRSMRPVAS. The Nuclear export signal signature appears at 231–242; the sequence is STLNSIVGLGVQ. The interaction with hexon protein stretch occupies residues 233–239; the sequence is LNSIVGL. The tract at residues 240-250 is binds to importin alpha/beta, involved in hexon nuclear import; that stretch reads GVQSLKRRRCF. The Nuclear localization signal motif lies at 245–248; it reads KRRR.

Belongs to the adenoviridae protein VI family. In terms of assembly, interacts with hexon protein; this interaction allows nuclear import of hexon trimers and possibly pre-capsid assembly. Interacts (via C-terminal NLS) with importin alpha/beta. Interacts (via PPxY motif) with host NEDD4 ubiquitine ligase; this interaction might play a role in virus intracellular transport during entry. Part of a complex composed of the core-capsid bridging protein, the endosome lysis protein VI and the hexon-linking protein VIII; these interactions bridge the virus core to the capsid. Interacts with peripentonal hexons; this interaction stabilizes the capsid by gluing two peripentonal hexons together and joining them with an adjacent group-of-nine hexon. As to quaternary structure, heterodimer with the viral protease; disulfide-linked. Interacts with the viral protease. Post-translationally, ubiquitinated by Nedd4 following partial capsid disassembly; which might play a role in intracellular virus movement during entry. Contains the major nuclear import and export signals. Proteolytically removed during virion maturation. The processing of the C-terminus turns the precursor into a mature viral structural protein and abrogates its ability to promote hexon import and act as a potential chaperone protein.

The protein localises to the host nucleus. Its subcellular location is the host cytoplasm. The protein resides in the virion. Functionally, during virus assembly, promotes hexon trimers nuclear import through nuclear pore complexes via an importin alpha/beta-dependent mechanism. By analogy to herpesviruses capsid assembly, might act as a chaperone to promote the formation of the icosahedral capsid. Structural component of the virion that provides increased stability to the particle shell through its interaction with the core-capsid bridging protein and the hexon-linking protein VIII. Fibers shedding during virus entry into host cell allows the endosome lysis protein to be exposed as a membrane-lytic peptide. Exhibits pH-independent membrane fragmentation activity and probably mediates viral rapid escape from host endosome via organellar membrane lysis. It is not clear if it then remains partially associated with the capsid and involved in the intracellular microtubule-dependent transport of capsid to the nucleus, or if it is lost during endosomal penetration. In terms of biological role, cofactor that activates the viral protease. Binds to viral protease in a 1:1 ratio. This is Pre-protein VI from Human adenovirus C serotype 2 (HAdV-2).